The primary structure comprises 327 residues: tRNA uridine(34) hydroxylase (327 aa).

One can recognise a Rhodanese domain in the interval 130 to 224 (LDEDTVVLDT…YGKDPEVQGE (95 aa)). C184 serves as the catalytic Cysteine persulfide intermediate.

Belongs to the TrhO family.

The catalysed reaction is uridine(34) in tRNA + AH2 + O2 = 5-hydroxyuridine(34) in tRNA + A + H2O. Catalyzes oxygen-dependent 5-hydroxyuridine (ho5U) modification at position 34 in tRNAs. In Streptococcus thermophilus (strain ATCC BAA-491 / LMD-9), this protein is tRNA uridine(34) hydroxylase.